Here is a 205-residue protein sequence, read N- to C-terminus: Ribosomal RNA large subunit methyltransferase E (205 aa).

5 residues coordinate S-adenosyl-L-methionine: glycine 60, tryptophan 62, aspartate 80, aspartate 96, and aspartate 121. Residue lysine 161 is the Proton acceptor of the active site.

It belongs to the class I-like SAM-binding methyltransferase superfamily. RNA methyltransferase RlmE family.

Its subcellular location is the cytoplasm. It carries out the reaction uridine(2552) in 23S rRNA + S-adenosyl-L-methionine = 2'-O-methyluridine(2552) in 23S rRNA + S-adenosyl-L-homocysteine + H(+). In terms of biological role, specifically methylates the uridine in position 2552 of 23S rRNA at the 2'-O position of the ribose in the fully assembled 50S ribosomal subunit. In Chromobacterium violaceum (strain ATCC 12472 / DSM 30191 / JCM 1249 / CCUG 213 / NBRC 12614 / NCIMB 9131 / NCTC 9757 / MK), this protein is Ribosomal RNA large subunit methyltransferase E.